A 246-amino-acid polypeptide reads, in one-letter code: MADS-box transcription factor 14 (246 aa).

The region spanning 1–61 (MGRGKVQLKR…GKLYEYATDS (61 aa)) is the MADS-box domain. Residues 88–178 (QGNWCHEYRK…QKELVEKQKV (91 aa)) form the K-box domain. The disordered stretch occupies residues 180–199 (KQQVQWDQTQPQTSSSSSSF).

As to quaternary structure, may interact with the K-box of MADS1 and MADS6. In terms of tissue distribution, highly expressed in sterile lemmas, at intermediate levels in stamens, and weakly in lemmas, paleas and carpels.

It is found in the nucleus. Its function is as follows. Probable transcription factor. May be involved in the control of flowering time. This Oryza sativa subsp. japonica (Rice) protein is MADS-box transcription factor 14 (MADS14).